The sequence spans 276 residues: MALPEFSMRQLLEAGVHFGHQTQRWNPRMGEFIYGDRNGIHILDLTQTHPMLEQALQVVRETVAKGGRILFVGTKRQAQKPVADAAERCAQYYMNHRWLGGTLTNWKTVSNSISRLKEIDEKTADGSLEGLTKKERLGMERDQIKLQASLGGIREMGGLPDLIFVIDVNKEDLAIAEAKKLGIPVVAVVDTNCSPDGVDYIIPGNDDAARAIALYCDLISRAALDGMSTQLETAGVDLGALEEGSVEEAIAEEAPAAAEEAPAAEPAAEETPAAEA.

The interval 251–276 (AEEAPAAAEEAPAAEPAAEETPAAEA) is disordered. The span at 252–276 (EEAPAAAEEAPAAEPAAEETPAAEA) shows a compositional bias: low complexity.

Belongs to the universal ribosomal protein uS2 family.

This Jannaschia sp. (strain CCS1) protein is Small ribosomal subunit protein uS2.